A 213-amino-acid chain; its full sequence is Thymidylate kinase (213 aa).

Position 9–16 (9–16 (GIEGCGKT)) interacts with ATP.

This sequence belongs to the thymidylate kinase family.

The enzyme catalyses dTMP + ATP = dTDP + ADP. Functionally, phosphorylation of dTMP to form dTDP in both de novo and salvage pathways of dTTP synthesis. This chain is Thymidylate kinase, found in Geobacter sulfurreducens (strain ATCC 51573 / DSM 12127 / PCA).